The chain runs to 214 residues: Imidazole glycerol phosphate synthase subunit HisH (214 aa).

The 209-residue stretch at 3 to 211 folds into the Glutamine amidotransferase type-1 domain; it reads IIAVIDYDMG…VEQVQATLAT (209 aa). Cys81 functions as the Nucleophile in the catalytic mechanism. Residues His186 and Glu188 contribute to the active site.

Heterodimer of HisH and HisF.

The protein localises to the cytoplasm. The enzyme catalyses 5-[(5-phospho-1-deoxy-D-ribulos-1-ylimino)methylamino]-1-(5-phospho-beta-D-ribosyl)imidazole-4-carboxamide + L-glutamine = D-erythro-1-(imidazol-4-yl)glycerol 3-phosphate + 5-amino-1-(5-phospho-beta-D-ribosyl)imidazole-4-carboxamide + L-glutamate + H(+). The catalysed reaction is L-glutamine + H2O = L-glutamate + NH4(+). It participates in amino-acid biosynthesis; L-histidine biosynthesis; L-histidine from 5-phospho-alpha-D-ribose 1-diphosphate: step 5/9. IGPS catalyzes the conversion of PRFAR and glutamine to IGP, AICAR and glutamate. The HisH subunit catalyzes the hydrolysis of glutamine to glutamate and ammonia as part of the synthesis of IGP and AICAR. The resulting ammonia molecule is channeled to the active site of HisF. The sequence is that of Imidazole glycerol phosphate synthase subunit HisH from Acaryochloris marina (strain MBIC 11017).